A 471-amino-acid chain; its full sequence is Extracellular endo-alpha-(1-&gt;5)-L-arabinanase (471 aa).

The first 19 residues, 1-19 (MRFLFLMITLTALTGYILA), serve as a signal peptide directing secretion. Asp-32 acts as the Proton acceptor in catalysis. Substrate contacts are provided by residues Asp-32, Gly-117, 167–170 (NALD), 187–189 (SWF), and 219–223 (HSSME). The active-site Proton donor is Glu-223. His-314 contacts Ca(2+).

Belongs to the glycosyl hydrolase 43 family. As to quaternary structure, monomer. It depends on Ca(2+) as a cofactor.

The protein resides in the secreted. The catalysed reaction is Endohydrolysis of (1-&gt;5)-alpha-arabinofuranosidic linkages in (1-&gt;5)-arabinans.. Its pathway is glycan metabolism; L-arabinan degradation. In terms of biological role, involved in the degradation of arabinan and is a key enzyme in the complete degradation of the plant cell wall. Catalyzes the internal cleavage of alpha-(1-&gt;5)-L-arabinofuranosyl residues in different arabinan-containing polysaccharides, and releases arabinotriose and arabinobiose as end products. It acts on branched arabinan (from sugar beet), but more slowly when compared to linear or debranched arabinan. This Thermotoga petrophila (strain ATCC BAA-488 / DSM 13995 / JCM 10881 / RKU-1) protein is Extracellular endo-alpha-(1-&gt;5)-L-arabinanase.